The sequence spans 234 residues: Aspartate/glutamate leucyltransferase (234 aa).

Belongs to the R-transferase family. Bpt subfamily.

The protein localises to the cytoplasm. The enzyme catalyses N-terminal L-glutamyl-[protein] + L-leucyl-tRNA(Leu) = N-terminal L-leucyl-L-glutamyl-[protein] + tRNA(Leu) + H(+). The catalysed reaction is N-terminal L-aspartyl-[protein] + L-leucyl-tRNA(Leu) = N-terminal L-leucyl-L-aspartyl-[protein] + tRNA(Leu) + H(+). In terms of biological role, functions in the N-end rule pathway of protein degradation where it conjugates Leu from its aminoacyl-tRNA to the N-termini of proteins containing an N-terminal aspartate or glutamate. The polypeptide is Aspartate/glutamate leucyltransferase (Hahella chejuensis (strain KCTC 2396)).